Consider the following 339-residue polypeptide: Lymphocyte-specific protein 1 (339 aa).

The segment at 1–198 (MAEASSDPGA…SPPLSPTTKL (198 aa)) is disordered. A Phosphoserine modification is found at Ser24. 2 stretches are compositionally biased toward basic and acidic residues: residues 32–43 (VHEQCQHERDRQ) and 51–61 (GGGHVPERPKQ). Phosphoserine is present on Ser111. A compositionally biased stretch (basic and acidic residues) spans 117–140 (EDRPGLHAYEKEDSDEVHLEELSL). Thr175 carries the post-translational modification Phosphothreonine. Ser177, Ser188, Ser189, and Ser193 each carry phosphoserine. The segment covering 185–196 (IEQSSPPLSPTT) has biased composition (polar residues). A Phosphoserine; by MAPKAPK2 modification is found at Ser252. The segment at 294–315 (KSLWEQKGGSKTSSTIKSTPSG) is disordered. The span at 300–315 (KGGSKTSSTIKSTPSG) shows a compositional bias: low complexity. Position 327 is an N6-acetyllysine (Lys327).

In terms of assembly, binds actin. Post-translationally, phosphorylated by casein kinase II, protein kinase C and MAPKAPK2. Phosphorylation by PKC induces translocation from membrane to cytoplasm. Phosphorylation by MAPKAPK2 may regulate neutrophil chemotaxis. As to expression, activated T-lymphocytes.

It localises to the cell membrane. Its function is as follows. May play a role in mediating neutrophil activation and chemotaxis. The chain is Lymphocyte-specific protein 1 (LSP1) from Homo sapiens (Human).